The chain runs to 151 residues: Deoxyuridine 5'-triphosphate nucleotidohydrolase (151 aa).

Substrate is bound by residues 70–72 (RSG), Asn-83, 87–89 (LID), and Met-97.

It belongs to the dUTPase family. Requires Mg(2+) as cofactor.

It catalyses the reaction dUTP + H2O = dUMP + diphosphate + H(+). It participates in pyrimidine metabolism; dUMP biosynthesis; dUMP from dCTP (dUTP route): step 2/2. In terms of biological role, this enzyme is involved in nucleotide metabolism: it produces dUMP, the immediate precursor of thymidine nucleotides and it decreases the intracellular concentration of dUTP so that uracil cannot be incorporated into DNA. The protein is Deoxyuridine 5'-triphosphate nucleotidohydrolase of Shigella flexneri serotype 5b (strain 8401).